Reading from the N-terminus, the 127-residue chain is Putative defensin-like protein 180 (127 aa).

The N-terminal stretch at 1–26 (MERITSLVFFASFLIIFVSGVNQTRA) is a signal peptide. 8 disulfide bridges follow: Cys-29-Cys-70, Cys-36-Cys-55, Cys-39-Cys-64, Cys-43-Cys-66, Cys-81-Cys-127, Cys-92-Cys-112, Cys-97-Cys-121, and Cys-101-Cys-123.

The protein belongs to the DEFL family.

The protein localises to the secreted. In Arabidopsis thaliana (Mouse-ear cress), this protein is Putative defensin-like protein 180 (LCR58).